A 282-amino-acid polypeptide reads, in one-letter code: Bis(5'-nucleosyl)-tetraphosphatase, symmetrical (282 aa).

The protein belongs to the Ap4A hydrolase family.

It carries out the reaction P(1),P(4)-bis(5'-adenosyl) tetraphosphate + H2O = 2 ADP + 2 H(+). Functionally, hydrolyzes diadenosine 5',5'''-P1,P4-tetraphosphate to yield ADP. The sequence is that of Bis(5'-nucleosyl)-tetraphosphatase, symmetrical from Salmonella arizonae (strain ATCC BAA-731 / CDC346-86 / RSK2980).